We begin with the raw amino-acid sequence, 551 residues long: Crossover junction endonuclease EME1B (551 aa).

Disordered regions lie at residues 1–55 (MNDH…PIFV) and 187–239 (TTLP…RLEK). Polar residues predominate over residues 37–51 (SDPTPQKQPPESSFT). The span at 202–239 (SKEDKTSAMEEKKLRKEQERLEKAASKAEEAERKRLEK) shows a compositional bias: basic and acidic residues. Residues 203–253 (KEDKTSAMEEKKLRKEQERLEKAASKAEEAERKRLEKEKKKWEKGKLALKS) are a coiled coil. An ERCC4 domain is found at 287 to 484 (NPIERSIVWT…PSMKSLLKVY (198 aa)).

Belongs to the EME1/MMS4 family. As to quaternary structure, forms a heterodimer with MUS81. Mg(2+) is required as a cofactor. The cofactor is Ca(2+).

The protein resides in the nucleus. In terms of biological role, interacts with MUS81 to form a DNA structure-specific endonuclease with substrate preference for branched DNA structures with a 5'-end at the branch nick. Typical substrates include 3'-flap structures, D-loops, replication forks, nicked Holliday junctions and also intact Holliday junctions with a reduced efficiency. May be required in mitosis for the processing of stalled or collapsed replication fork intermediates. Plays a role in DNA repair and in genotoxic stress-induced homologous recombination (HR) in somatic cells. Mediates a subset of meiotic recombination events that are insensitive to crossover interference. The protein is Crossover junction endonuclease EME1B (EME1B) of Arabidopsis thaliana (Mouse-ear cress).